Consider the following 81-residue polypeptide: ATP synthase subunit c (81 aa).

2 helical membrane passes run 6-26 and 57-77; these read ASAS…GPGI and LAFM…LLFA.

This sequence belongs to the ATPase C chain family. In terms of assembly, F-type ATPases have 2 components, F(1) - the catalytic core - and F(0) - the membrane proton channel. F(1) has five subunits: alpha(3), beta(3), gamma(1), delta(1), epsilon(1). F(0) has four main subunits: a(1), b(1), b'(1) and c(10-14). The alpha and beta chains form an alternating ring which encloses part of the gamma chain. F(1) is attached to F(0) by a central stalk formed by the gamma and epsilon chains, while a peripheral stalk is formed by the delta, b and b' chains.

Its subcellular location is the cellular thylakoid membrane. Functionally, f(1)F(0) ATP synthase produces ATP from ADP in the presence of a proton or sodium gradient. F-type ATPases consist of two structural domains, F(1) containing the extramembraneous catalytic core and F(0) containing the membrane proton channel, linked together by a central stalk and a peripheral stalk. During catalysis, ATP synthesis in the catalytic domain of F(1) is coupled via a rotary mechanism of the central stalk subunits to proton translocation. Key component of the F(0) channel; it plays a direct role in translocation across the membrane. A homomeric c-ring of between 10-14 subunits forms the central stalk rotor element with the F(1) delta and epsilon subunits. In Gloeothece citriformis (strain PCC 7424) (Cyanothece sp. (strain PCC 7424)), this protein is ATP synthase subunit c.